The following is a 464-amino-acid chain: Hydrogen cyanide synthase subunit HcnB (464 aa).

Heterotrimer of HcnA, HcnB and HcnC.

The protein localises to the cell membrane. The enzyme catalyses glycine + 2 A = hydrogen cyanide + 2 AH2 + CO2. Its activity is regulated as follows. Oxygen is necessary for cyanogenesis. Activated by succinate, glycine methyl ester, glucose and D,L-methionine in addition to glycine. Phenazine methosulfate, methylene blue, 2,6-dichlorophenolindophenol (DCIP) and ferricyanide can replace oxygen for the reaction. Inhibited by pyrrolnitrin and acriflavine at 1 mM concentration. Its function is as follows. A three-component membrane-bound flavoenzyme that catalyzes the formation of hydrogen cyanide, a secondary metabolite, by transfer of electrons to a cyanide-resistant branch of the aerobic respiratory chain. This chain is Hydrogen cyanide synthase subunit HcnB, found in Pseudomonas aeruginosa (strain ATCC 15692 / DSM 22644 / CIP 104116 / JCM 14847 / LMG 12228 / 1C / PRS 101 / PAO1).